A 587-amino-acid chain; its full sequence is Kelch-like protein 3 (587 aa).

Ser-10 carries the phosphoserine modification. One can recognise a BTB domain in the interval 50–117 (CDVMIVAEDV…IYTAEIEVTE (68 aa)). The BACK domain occupies 152-254 (CLGIRAFADV…PRDYLVQTVE (103 aa)). Position 295 is a phosphothreonine (Thr-295). Kelch repeat units follow at residues 302 to 347 (VMIV…FMAG), 348 to 394 (HVYA…VLND), 396 to 441 (LYAV…VVEG), 442 to 490 (KLYA…VLSG), 491 to 537 (QLYA…AVNG), and 539 to 585 (LYVV…VIHK). At Thr-375 the chain carries Phosphothreonine. Ser-376 is subject to Phosphoserine. Ser-433 is subject to Phosphoserine; by PKA and PKC.

This sequence belongs to the KLHL3 family. In terms of assembly, homodimer. Component of the BCR(KLHL3) E3 ubiquitin ligase complex, at least composed of CUL3 and KLHL3 and RBX1. Interacts with CLDN8. Phosphorylation at Ser-433 by PKA or PKC decreases the interaction with WNK1 and WNK4, leading to inhibit their degradation by the BCR(KLHL3) complex. Phosphorylated at Ser-433 by PKC in response to angiotensin II signaling, decreasing ability to promote degradation of WNK1 and WNK4, leading to activation of Na-Cl cotransporter SLC12A3/NCC. Phosphorylation at Ser-433 is increased by insulin. Dephosphorylated at Ser-433 by calcineurin PPP3CA, promoting degradation of WNK1 and WNK4. In terms of tissue distribution, widely expressed.

The protein localises to the cytoplasm. The protein resides in the cytosol. Its subcellular location is the cytoskeleton. It functions in the pathway protein modification; protein ubiquitination. In terms of biological role, substrate-specific adapter of a BCR (BTB-CUL3-RBX1) E3 ubiquitin ligase complex that acts as a regulator of ion transport in the distal nephron. The BCR(KLHL3) complex acts by mediating ubiquitination and degradation of WNK1 and WNK4, two activators of Na-Cl cotransporter SLC12A3/NCC in distal convoluted tubule cells of kidney, thereby regulating NaCl reabsorption. The BCR(KLHL3) complex also mediates ubiquitination and degradation of WNK3. The BCR(KLHL3) complex also mediates ubiquitination of CLDN8, a tight-junction protein required for paracellular chloride transport in the kidney, leading to its degradation. The protein is Kelch-like protein 3 of Homo sapiens (Human).